The sequence spans 97 residues: Mapk-regulated corepressor-interacting protein 1 (97 aa).

Residues 1 to 30 form a disordered region; the sequence is MTSSPVSRVVYNGKRTSSPRSPPSSSEIFT. Phosphoserine occurs at positions 21 and 24. Thr-30 is subject to Phosphothreonine. Tyr-41 is subject to Phosphotyrosine. Lys-79 is subject to N6-acetyllysine. A PXDLS motif motif is present at residues 80 to 84; sequence PIDLS.

It belongs to the MCRIP family. Interacts (unphosphorylated form, via the PXDLS motif) with CTBP1, competitively inhibiting CTBP-ZEB1 interaction. Interacts with CTBP2. Interacts with MCRIP2. Interacts with DDX6. Phosphorylation by MAPK3/1 (ERK1/2) regulates MCRIP1 binding to CTBP(s).

The protein resides in the nucleus. Its subcellular location is the cytoplasm. It is found in the stress granule. Functionally, the phosphorylation status of MCRIP1 functions as a molecular switch to regulate epithelial-mesenchymal transition. Unphosphorylated MCRIP1 binds to and inhibits the transcriptional corepressor CTBP(s). When phosphorylated by MAPK/ERK, MCRIP1 releases CTBP(s) resulting in transcriptional silencing of the E-cadherin gene and induction of epithelial-mesenchymal transition. This chain is Mapk-regulated corepressor-interacting protein 1, found in Homo sapiens (Human).